The sequence spans 121 residues: UPF0102 protein Xfasm12_1748 (121 aa).

Belongs to the UPF0102 family.

This is UPF0102 protein Xfasm12_1748 from Xylella fastidiosa (strain M12).